The following is a 210-amino-acid chain: Putative biopolymer transport protein ExbB-like 3 (210 aa).

Helical transmembrane passes span 2 to 22, 104 to 124, and 152 to 172; these read AGGIVAVPLLGFSLLAVALII, LFQTIITVSPLLGLLGTILGL, and LVSTVMGLVVAIATLLFANVF.

It belongs to the ExbB/TolQ family.

The protein localises to the cell inner membrane. In terms of biological role, involved in the TonB-dependent energy-dependent transport of various receptor-bound substrates. Protects ExbD from proteolytic degradation and functionally stabilizes TonB. The chain is Putative biopolymer transport protein ExbB-like 3 from Synechocystis sp. (strain ATCC 27184 / PCC 6803 / Kazusa).